We begin with the raw amino-acid sequence, 518 residues long: Putative cytochrome P450 CYP13A6 (518 aa).

C463 is a binding site for heme.

This sequence belongs to the cytochrome P450 family. The cofactor is heme.

In terms of biological role, cytochromes P450 are a group of heme-thiolate monooxygenases. They oxidize a variety of structurally unrelated compounds, including steroids, fatty acids, and xenobiotics. This Caenorhabditis elegans protein is Putative cytochrome P450 CYP13A6 (cyp-13A6).